The following is a 108-amino-acid chain: U-scoloptoxin(16)-Er10a (108 aa).

The signal sequence occupies residues 1-24 (MASFTSFCVLFTFCLLLLAHQARS).

Belongs to the scoloptoxin-16 family. Post-translationally, contains 4 disulfide bonds. Expressed by the venom gland.

It is found in the secreted. The protein is U-scoloptoxin(16)-Er10a of Ethmostigmus rubripes (Giant centipede).